Here is a 141-residue protein sequence, read N- to C-terminus: Hemoglobin subunit alpha (141 aa).

Residues 1–141 (VLSDEDKTNV…VSTVLTSKYR (141 aa)) enclose the Globin domain. S3 carries the post-translational modification Phosphoserine. K7 carries the post-translational modification N6-succinyllysine. T8 bears the Phosphothreonine mark. At K11 the chain carries N6-succinyllysine. K16 is subject to N6-acetyllysine; alternate. The residue at position 16 (K16) is an N6-succinyllysine; alternate. Y24 is subject to Phosphotyrosine. At S35 the chain carries Phosphoserine. K40 is subject to N6-succinyllysine. S49 bears the Phosphoserine mark. H58 lines the O2 pocket. H87 serves as a coordination point for heme b. S102 bears the Phosphoserine mark. At T108 the chain carries Phosphothreonine. S124 and S131 each carry phosphoserine. Phosphothreonine occurs at positions 134 and 137. Residue S138 is modified to Phosphoserine.

Belongs to the globin family. In terms of assembly, heterotetramer of two alpha chains and two beta chains. As to expression, red blood cells.

Functionally, involved in oxygen transport from the lung to the various peripheral tissues. Its function is as follows. Hemopressin acts as an antagonist peptide of the cannabinoid receptor CNR1. Hemopressin-binding efficiently blocks cannabinoid receptor CNR1 and subsequent signaling. This chain is Hemoglobin subunit alpha (HBA), found in Trichechus inunguis (Amazon manatee).